Reading from the N-terminus, the 130-residue chain is Large ribosomal subunit protein bL17 (130 aa).

It belongs to the bacterial ribosomal protein bL17 family. Part of the 50S ribosomal subunit. Contacts protein L32.

The sequence is that of Large ribosomal subunit protein bL17 from Pectobacterium atrosepticum (strain SCRI 1043 / ATCC BAA-672) (Erwinia carotovora subsp. atroseptica).